A 74-amino-acid chain; its full sequence is Progonadoliberin-3 (74 aa).

Positions 1 to 15 are cleaved as a signal peptide; sequence VRVVVLALVAQVTLS. Pyrrolidone carboxylic acid is present on glutamine 16. The residue at position 25 (glycine 25) is a Glycine amide.

The protein belongs to the GnRH family.

It localises to the secreted. Stimulates the secretion of gonadotropins. The protein is Progonadoliberin-3 (gnrh3) of Oncorhynchus tshawytscha (Chinook salmon).